A 482-amino-acid polypeptide reads, in one-letter code: Catalase (482 aa).

Catalysis depends on residues H53 and N126. Position 336 (Y336) interacts with heme.

Belongs to the catalase family. Heme is required as a cofactor.

It localises to the periplasm. The enzyme catalyses 2 H2O2 = O2 + 2 H2O. Decomposes hydrogen peroxide into water and oxygen; serves to protect cells from the toxic effects of hydrogen peroxide. Could protect cells in nodules which have a high potential to produce hydrogen peroxide because of the strong reducing conditions required for nitrogen fixation and the action of several proteins. The polypeptide is Catalase (katA) (Aliivibrio fischeri (strain ATCC 700601 / ES114) (Vibrio fischeri)).